We begin with the raw amino-acid sequence, 1097 residues long: Error-prone DNA polymerase (1097 aa).

The tract at residues 1039–1097 is disordered; sequence PTGRGDEFAHGSPGGGDSRDRSPPKPRDIVVPLCRARHKGIDPEPETMPSAFPKPRDFR. A compositionally biased stretch (basic and acidic residues) spans 1055 to 1066; that stretch reads DSRDRSPPKPRD.

This sequence belongs to the DNA polymerase type-C family. DnaE2 subfamily.

The protein localises to the cytoplasm. The catalysed reaction is DNA(n) + a 2'-deoxyribonucleoside 5'-triphosphate = DNA(n+1) + diphosphate. Functionally, DNA polymerase involved in damage-induced mutagenesis and translesion synthesis (TLS). It is not the major replicative DNA polymerase. The protein is Error-prone DNA polymerase of Allorhizobium ampelinum (strain ATCC BAA-846 / DSM 112012 / S4) (Agrobacterium vitis (strain S4)).